The following is a 92-amino-acid chain: Large ribosomal subunit protein bL25 (92 aa).

This sequence belongs to the bacterial ribosomal protein bL25 family. As to quaternary structure, part of the 50S ribosomal subunit; part of the 5S rRNA/L5/L18/L25 subcomplex. Contacts the 5S rRNA. Binds to the 5S rRNA independently of L5 and L18.

Functionally, this is one of the proteins that binds to the 5S RNA in the ribosome where it forms part of the central protuberance. This chain is Large ribosomal subunit protein bL25, found in Vibrio campbellii (strain ATCC BAA-1116).